Reading from the N-terminus, the 435-residue chain is Serine--tRNA ligase (435 aa).

242 to 244 (TAE) contacts L-serine. 273-275 (RSE) lines the ATP pocket. E296 lines the L-serine pocket. 360–363 (EISS) lines the ATP pocket. S396 contacts L-serine.

Belongs to the class-II aminoacyl-tRNA synthetase family. Type-1 seryl-tRNA synthetase subfamily. In terms of assembly, homodimer. The tRNA molecule binds across the dimer.

The protein localises to the cytoplasm. The enzyme catalyses tRNA(Ser) + L-serine + ATP = L-seryl-tRNA(Ser) + AMP + diphosphate + H(+). It catalyses the reaction tRNA(Sec) + L-serine + ATP = L-seryl-tRNA(Sec) + AMP + diphosphate + H(+). It functions in the pathway aminoacyl-tRNA biosynthesis; selenocysteinyl-tRNA(Sec) biosynthesis; L-seryl-tRNA(Sec) from L-serine and tRNA(Sec): step 1/1. In terms of biological role, catalyzes the attachment of serine to tRNA(Ser). Is also able to aminoacylate tRNA(Sec) with serine, to form the misacylated tRNA L-seryl-tRNA(Sec), which will be further converted into selenocysteinyl-tRNA(Sec). In Vibrio vulnificus (strain CMCP6), this protein is Serine--tRNA ligase.